Here is a 435-residue protein sequence, read N- to C-terminus: Casein kinase I homolog 2 (435 aa).

A Protein kinase domain is found at 12–282 (YRVGRKIGEG…FLQELFDDVL (271 aa)). ATP-binding positions include 18–26 (IGEGSFGVI) and lysine 41. Aspartate 131 (proton acceptor) is an active-site residue. Position 361 is a phosphoserine (serine 361).

This sequence belongs to the protein kinase superfamily. CK1 Ser/Thr protein kinase family. Casein kinase I subfamily.

It is found in the cytoplasm. It catalyses the reaction L-seryl-[protein] + ATP = O-phospho-L-seryl-[protein] + ADP + H(+). It carries out the reaction L-threonyl-[protein] + ATP = O-phospho-L-threonyl-[protein] + ADP + H(+). Its function is as follows. Casein kinases are operationally defined by their preferential utilization of acidic proteins such as caseins as substrates. May contribute to the regulation of morphology. The protein is Casein kinase I homolog 2 (cki2) of Schizosaccharomyces pombe (strain 972 / ATCC 24843) (Fission yeast).